Reading from the N-terminus, the 1535-residue chain is MEPRMESCLAQVLQKDVGKRLQVGQELIDYFSDRQKSADLEHDQTLLDKLVDGLATSWVNSSNYKVVLLGMDILSALVTRLQDRFKAQIGTVLPSLIDRLGDAKDSVREQDQTLLLKIMDQAANPQYVWDRMLGGFKHKNFRTREGICLCLIATLNASGAQTLTLSKIVPHICNLLGDPNSQVRDAAINSLVEIYRHVGERVRADLSKKGLPQSRLNVIFTKFDEVQKSGNMIQSANEKNFDDEDSVDGNRPSSASSSSSKAPSSSRRNVNLGTTRRLMSSSLGSKSSAAKEGAGAVDEEDFIKAFDDVPVVQIYSSRDLEESINKIREILSDDKHDWEQRVNALKKIRSLLLAGAAEYDNFFQHLRLLDGAFKLSAKDLRSQVVREACITLGHLSSVLGNKFDHGAEAIMPTIFNLIPNSAKIMATSGVVAVRLIIRHTHIPRLIPVITSNCTSKSVAVRRRCFEFLDLLLQEWQTHSLERHISVLAETIKKGIHDADSEARIEARKCYWGFHSHFSREAEHLYHTLESSYQKALQSHLKNSDSIVSLPQSDRSSSSSQESLNRPLSAKRSPTGSTASRGSTVSTKSVSTTGSLQRSRSDIDVNAAASAKSKVSSSSGSPAFSSAAALPPGSYASLGRIRTRRQSSGSTTNVASTPDSRGRSRAKVVSQSQRSRSANPAGAGSRSSSPGKLLGSGLAGGSSRGPPVTPSSEKRSKIPRSQGCSRETSPNRIGLARSSRIPRPSMSQGCSRDTSRESSRDTSPARGFTPLDRFGLGQSGRIPGSVNAMRVLSTSTDLEAAVADALKKPVRRRYEPYGMYSDDDANSDASSVCSERSYGSRNGGIPHYLRQTEDVAEVLNHCASSNWSERKEGLLGLQNLLKSQRTLSRVELKRLCEIFTRMFADPHSKRVFSMFLETLVDFIIIHKDDLQDWLFVLLTQLLKKMGADLLGSVQAKVQKALDVTRDSFPFDQQFNILMRFIVDQTQTPNLKVKVAILKYIESLARQMDPTDFVNSSETRLAVSRIITWTTEPKSSDVRKAAQIVLISLFELNTPEFTMLLGALPKTFQDGATKLLHNHLKNSSNTGVGSPSNTIGRTPSRHPSSRTSPLTSPTNCSHGGLSPSRLWGWSADGLSKPPPPFSQPNSIPTAPSHKTLRRSYSPSMLDYDTENLNSEEIYSSLRGVTEAIEKFSFRSQEDLNEPIKRDGKKDCDIVSRDGGAASPATEGRGGSEIEGGRMALDNKTSLLNTQPPRAFPGPRAREYNPYPYSDTINTYDKTALKEAVFDDDMEQLRDVPIDHSDLVADLLKELSNHNERVEERKGALLELLKITREDSLGVWEEHFKTILLLLLETLGDKDHSIRALALRVLREILRNQPARFKNYAELTIMKTLEAHKDSHKEVVRAAEEAASTLASSIHPEQCIKVLCPIIQTADYPINLAAIKMQTKVVERITKESLLQLLVDIIPGLLQGYDNTESSVRKASVFCLVAIYSVIGEDLKPHLAQLTGSKMKLLNLYIKRAQTTNSNSSSSSDVSTHS.

2 HEAT repeats span residues 87-124 (AQIG…QAAN) and 163-200 (LTLS…HVGE). A disordered region spans residues 237-290 (NEKNFDDEDSVDGNRPSSASSSSSKAPSSSRRNVNLGTTRRLMSSSLGSKSSAA). S246 carries the phosphoserine modification. A compositionally biased stretch (low complexity) spans 252-266 (PSSASSSSSKAPSSS). Positions 267–279 (RRNVNLGTTRRLM) are enriched in polar residues. A compositionally biased stretch (low complexity) spans 280–290 (SSSLGSKSSAA). HEAT repeat units lie at residues 405-440 (HGAE…IRHT) and 441-477 (HIPR…EWQT). Disordered regions lie at residues 543-600 (SDSI…RSRS) and 612-782 (SKVS…GRIP). Residues S545, S548, S558, S559, and S568 each carry the phosphoserine modification. Positions 548 to 567 (SLPQSDRSSSSSQESLNRPL) are enriched in low complexity. Residues 579-594 (SRGSTVSTKSVSTTGS) show a composition bias toward low complexity. Residue S600 is modified to Phosphoserine. Positions 612-633 (SKVSSSSGSPAFSSAAALPPGS) are enriched in low complexity. Phosphoserine is present on residues S636, S646, S647, and S649. Over residues 645 to 658 (QSSGSTTNVASTPD) the composition is skewed to polar residues. T656 carries the phosphothreonine modification. The interval 662 to 782 (RSRAKVVSQS…FGLGQSGRIP (121 aa)) is interaction with microtubules, MAPRE1 and MAPRE3. Positions 673–695 (RSRSANPAGAGSRSSSPGKLLGS) are enriched in low complexity. Phosphoserine occurs at positions 684, 688, 695, and 702. T708 bears the Phosphothreonine mark. A Phosphoserine modification is found at S711. Positions 721–730 (QGCSRETSPN) are enriched in polar residues. 3 positions are modified to phosphoserine: S784, S794, and S820. Residues 971-1008 (QQFNILMRFIVDQTQTPNLKVKVAILKYIESLARQMDP) form an HEAT 5 repeat. Residues 1078-1157 (LKNSSNTGVG…APSHKTLRRS (80 aa)) are disordered. Polar residues predominate over residues 1079 to 1094 (KNSSNTGVGSPSNTIG). Residue S1088 is modified to Phosphoserine. Phosphothreonine occurs at positions 1092 and 1096. The span at 1103 to 1112 (SRTSPLTSPT) shows a compositional bias: low complexity. S1110, F1139, and S1193 each carry phosphoserine. Over residues 1200–1213 (PIKRDGKKDCDIVS) the composition is skewed to basic and acidic residues. Disordered regions lie at residues 1200-1233 (PIKR…EIEG) and 1245-1266 (LNTQ…PYPY). A Phosphoserine modification is found at S1220. The interaction with CLIP2 and RSN stretch occupies residues 1251 to 1535 (RAFPGPRARE…SSSSDVSTHS (285 aa)). The interaction with PHLDB2 stretch occupies residues 1251 to 1535 (RAFPGPRARE…SSSSDVSTHS (285 aa)). A localization to kinetochores region spans residues 1253-1535 (FPGPRAREYN…SSSSDVSTHS (283 aa)). Residues 1296 to 1327 (DHSDLVADLLKELSNHNERVEERKGALLELLK) are a coiled coil. HEAT repeat units lie at residues 1339–1376 (EHFK…NQPA) and 1457–1494 (QLLV…VIGE).

The protein belongs to the CLASP family. As to quaternary structure, interacts with ERC1, MAPRE1, MAPRE3, microtubules, and PHLDB2. The interaction with ERC1 may be mediated by PHLDB2. Interacts with GCC2; recruits CLASP1 to Golgi membranes. Interacts with CLIP2 and RSN. Interacts with MACF1. Interacts with mtcl2 and MTCL1. Highly expressed in brain and heart and at lower levels in kidney, lung, skeletal muscle and testis.

Its subcellular location is the cytoplasm. It localises to the cytoskeleton. The protein localises to the microtubule organizing center. It is found in the centrosome. The protein resides in the chromosome. Its subcellular location is the centromere. It localises to the kinetochore. The protein localises to the spindle. It is found in the golgi apparatus. The protein resides in the trans-Golgi network. Microtubule plus-end tracking protein that promotes the stabilization of dynamic microtubules. Involved in the nucleation of noncentrosomal microtubules originating from the trans-Golgi network (TGN). Required for the polarization of the cytoplasmic microtubule arrays in migrating cells towards the leading edge of the cell. May act at the cell cortex to enhance the frequency of rescue of depolymerizing microtubules by attaching their plus-ends to cortical platforms composed of ERC1 and PHLDB2. This cortical microtubule stabilizing activity is regulated at least in part by phosphatidylinositol 3-kinase signaling. Also performs a similar stabilizing function at the kinetochore which is essential for the bipolar alignment of chromosomes on the mitotic spindle. This Mus musculus (Mouse) protein is CLIP-associating protein 1 (Clasp1).